Here is a 238-residue protein sequence, read N- to C-terminus: Flagellar L-ring protein (238 aa).

Positions 1-16 (MNKAILAVAMVLLLAG) are cleaved as a signal peptide. Cysteine 17 carries N-palmitoyl cysteine lipidation. The S-diacylglycerol cysteine moiety is linked to residue cysteine 17.

Belongs to the FlgH family. In terms of assembly, the basal body constitutes a major portion of the flagellar organelle and consists of four rings (L,P,S, and M) mounted on a central rod.

It localises to the cell outer membrane. Its subcellular location is the bacterial flagellum basal body. Functionally, assembles around the rod to form the L-ring and probably protects the motor/basal body from shearing forces during rotation. The sequence is that of Flagellar L-ring protein from Brucella canis (strain ATCC 23365 / NCTC 10854 / RM-666).